The primary structure comprises 197 residues: Putative peptidyl-prolyl cis-trans isomerase (197 aa).

Residues 14–195 form the PPIase cyclophilin-type domain; sequence GEIKVVMHTN…HDVVIESIDV (182 aa).

The protein belongs to the cyclophilin-type PPIase family.

The catalysed reaction is [protein]-peptidylproline (omega=180) = [protein]-peptidylproline (omega=0). In terms of biological role, PPIases accelerate the folding of proteins. It catalyzes the cis-trans isomerization of proline imidic peptide bonds in oligopeptides. This chain is Putative peptidyl-prolyl cis-trans isomerase, found in Staphylococcus aureus (strain bovine RF122 / ET3-1).